A 254-amino-acid chain; its full sequence is MPSMRKLWIALTFLTRIPLPQPEQVTSEEFTQSQHYYPLVGLILGGALWLALTLLLPHYPPLVTAALLLALELILTGGIHLDGLMDSMDGLLSARTPERMLEIMKDSHVGAFGALSAMVYLLLKFSLLAGLLALSSPLVPYLVLFMPILSRWIFLIGVHYFPYARAQGFGQGFHETSRQTRWLFLGEGLLLLFLTYWVLQWPGIAGFILATLFILLFTRKVSRLLGGLTGDLYGASIELSELLFLLGAFPLLYP.

The next 6 helical transmembrane spans lie at 36–56 (YYPL…TLLL), 61–81 (PLVT…GIHL), 114–134 (ALSA…LLAL), 138–158 (LVPY…LIGV), 197–217 (WVLQ…ILLF), and 232–252 (LYGA…FPLL).

This sequence belongs to the CobS family. Mg(2+) serves as cofactor.

It is found in the cell membrane. It catalyses the reaction alpha-ribazole + adenosylcob(III)inamide-GDP = adenosylcob(III)alamin + GMP + H(+). It carries out the reaction alpha-ribazole 5'-phosphate + adenosylcob(III)inamide-GDP = adenosylcob(III)alamin 5'-phosphate + GMP + H(+). It participates in cofactor biosynthesis; adenosylcobalamin biosynthesis; adenosylcobalamin from cob(II)yrinate a,c-diamide: step 7/7. Functionally, joins adenosylcobinamide-GDP and alpha-ribazole to generate adenosylcobalamin (Ado-cobalamin). Also synthesizes adenosylcobalamin 5'-phosphate from adenosylcobinamide-GDP and alpha-ribazole 5'-phosphate. This chain is Adenosylcobinamide-GDP ribazoletransferase, found in Desulfitobacterium hafniense (strain Y51).